The primary structure comprises 310 residues: Porphobilinogen deaminase (310 aa).

The residue at position 242 (Cys-242) is an S-(dipyrrolylmethanemethyl)cysteine.

This sequence belongs to the HMBS family. In terms of assembly, monomer. It depends on dipyrromethane as a cofactor.

It catalyses the reaction 4 porphobilinogen + H2O = hydroxymethylbilane + 4 NH4(+). Its pathway is porphyrin-containing compound metabolism; protoporphyrin-IX biosynthesis; coproporphyrinogen-III from 5-aminolevulinate: step 2/4. Tetrapolymerization of the monopyrrole PBG into the hydroxymethylbilane pre-uroporphyrinogen in several discrete steps. This Psychromonas ingrahamii (strain DSM 17664 / CCUG 51855 / 37) protein is Porphobilinogen deaminase.